A 246-amino-acid chain; its full sequence is DNA repair protein RecO (246 aa).

Belongs to the RecO family.

Involved in DNA repair and RecF pathway recombination. In Pelobacter propionicus (strain DSM 2379 / NBRC 103807 / OttBd1), this protein is DNA repair protein RecO.